The sequence spans 594 residues: (E)-beta-ocimene synthase TPS6FN (594 aa).

(2E)-geranyl diphosphate-binding residues include R303, D340, D344, R489, and N492. Mg(2+) contacts are provided by D340 and D344. The DDXXD motif motif lies at D340–D344. 3 residues coordinate Mg(2+): N492, T496, and E500.

The protein belongs to the terpene synthase family. Tpsb subfamily. It depends on Mg(2+) as a cofactor. The cofactor is Mn(2+). As to expression, expressed in glandular trichomes two to four weeks after flowering onset.

The catalysed reaction is (2E)-geranyl diphosphate = (E)-beta-ocimene + diphosphate. It catalyses the reaction (2E)-geranyl diphosphate = (Z)-beta-ocimene + diphosphate. The protein operates within secondary metabolite biosynthesis; terpenoid biosynthesis. In terms of biological role, involved in monoterpene (C10) olefins biosynthesis, constituants of cannabinoids and terpenoids-rich resins. Catalyzes mainly the conversion of (2E)-geranyl diphosphate to (E)-beta-ocimene, and also produces minor products such as (Z)-beta-ocimene. This Cannabis sativa (Hemp) protein is (E)-beta-ocimene synthase TPS6FN.